The primary structure comprises 667 residues: Sorting nexin mvp1 (667 aa).

The tract at residues 221–268 (AGNLHSQQPPKFSVDSSVDDNAITPRKPFSKIPNRLSPSTQPLLSNSR) is disordered. Residues 224 to 236 (LHSQQPPKFSVDS) are compositionally biased toward polar residues. In terms of domain architecture, PX spans 279-398 (TSFPASLEMN…RVFFTEPNVF (120 aa)). 3 residues coordinate a 1,2-diacyl-sn-glycero-3-phospho-(1D-myo-inositol-3-phosphate): R320, S322, and K346. Positions 574–594 (ANSDESGRNRTFLNRSSKKRA) are disordered.

Belongs to the sorting nexin family. In terms of assembly, homodimer. Forms an autoinhibited tetramer consisting of 2 homodimers that self-interact, wherein the membrane-interacting BAR surfaces are sequestered and the PX lipid-binding sites are occluded. Interacts with Vps1.

The protein localises to the cytoplasm. The protein resides in the endosome membrane. Functionally, required for vacuolar protein sorting. Component of the retromer-mediated endosome-to-Golgi retrograde pathway. Required for efficient cargo export from the endosome, promoting Vps1-mediated fission of retromer-coated tubules that bud from the endosome. The chain is Sorting nexin mvp1 (mvp1) from Schizosaccharomyces pombe (strain 972 / ATCC 24843) (Fission yeast).